A 152-amino-acid chain; its full sequence is Fibroblast growth factor 1 (152 aa).

The residue at position 2 (A2) is an N-acetylalanine. The propeptide occupies 2–15 (AEGEITTFTALTEK). Position 33 (N33) interacts with heparin. Residues 127-143 (KKNGSCKRGPRTHYGQK) form a heparin-binding region.

The protein belongs to the heparin-binding growth factors family. As to quaternary structure, monomer. Homodimer. Interacts with FGFR1, FGFR2, FGFR3 and FGFR4. Affinity between fibroblast growth factors (FGFs) and their receptors is increased by heparan sulfate glycosaminoglycans that function as coreceptors. Found in a complex with FGFBP1, FGF1 and FGF2. Interacts with FGFBP1. Part of a Cu(2+)-dependent multiprotein aggregate containing FGF1, S100A13 and SYT1. Interacts with SYT1. Interacts with S100A13. Interacts with LRRC59. Interacts with CSNKA, CSNKB and FIBP. While binding with LRRC59, CSNKA and FIBP seem mutually exclusive, CSNKB and FIBP may cooperatively interact with FGF1. Forms a ternary complex with FGFR1 and ITGAV:ITGB3 and induces the recruitment of PTPN11 to the complex. In the nucleus, phosphorylated by PKC/PRKCD.

Its subcellular location is the secreted. The protein localises to the cytoplasm. It localises to the cell cortex. The protein resides in the cytosol. It is found in the nucleus. Its function is as follows. Plays an important role in the regulation of cell survival, cell division, angiogenesis, cell differentiation and cell migration. Functions as a potent mitogen in vitro. Acts as a ligand for FGFR1 and integrins. Binds to FGFR1 in the presence of heparin leading to FGFR1 dimerization and activation via sequential autophosphorylation on tyrosine residues which act as docking sites for interacting proteins, leading to the activation of several signaling cascades. Binds to integrin ITGAV:ITGB3. Its binding to integrin, subsequent ternary complex formation with integrin and FGFR1, and the recruitment of PTPN11 to the complex are essential for FGF1 signaling. Induces the phosphorylation and activation of FGFR1, FRS2, MAPK3/ERK1, MAPK1/ERK2 and AKT1. Can induce angiogenesis. In Sus scrofa (Pig), this protein is Fibroblast growth factor 1 (FGF1).